A 337-amino-acid chain; its full sequence is MQSIPIKNVGESRLVDPFQRQYYYLRLSITDQCNFRCTYCLPDGYQPEANKPSFLTLKEITHLAQAFAEMGTEKIRLTGGEPTLRKDFISIAESITNIDGIRQLAVTTNGYRMAKDVADWKQAGITSINVSVDSLDPKMFHQITGINKFDDVMRGIDRAFEVGYNKVKVNSVLMKNLNDKEFEQFLAWVKDRPIQMRFIELMQTGEMDSFFDKFHLSGQVLADKLLKNGWTLQHKSHTDGPAKVFTHSDYTGEIGLIMPYEKNFCASCNRLRVSAKGKLHLCLFGEEGIELRDLLQSHEQQGILQARIFAALQGKREHHYLHIGDTGVRNHLASIGG.

The Radical SAM core domain occupies 17–243; that stretch reads PFQRQYYYLR…HKSHTDGPAK (227 aa). R26 lines the GTP pocket. [4Fe-4S] cluster contacts are provided by C33 and C37. Y39 is a binding site for S-adenosyl-L-methionine. Residue C40 participates in [4Fe-4S] cluster binding. Residue R76 coordinates GTP. G80 serves as a coordination point for S-adenosyl-L-methionine. Position 107 (T107) interacts with GTP. S131 serves as a coordination point for S-adenosyl-L-methionine. Position 168 (K168) interacts with GTP. M202 lines the S-adenosyl-L-methionine pocket. [4Fe-4S] cluster contacts are provided by C265 and C268. 270 to 272 is a GTP binding site; that stretch reads RLR. C282 is a [4Fe-4S] cluster binding site.

Belongs to the radical SAM superfamily. MoaA family. As to quaternary structure, monomer and homodimer. The cofactor is [4Fe-4S] cluster.

The enzyme catalyses GTP + AH2 + S-adenosyl-L-methionine = (8S)-3',8-cyclo-7,8-dihydroguanosine 5'-triphosphate + 5'-deoxyadenosine + L-methionine + A + H(+). Its pathway is cofactor biosynthesis; molybdopterin biosynthesis. In terms of biological role, catalyzes the cyclization of GTP to (8S)-3',8-cyclo-7,8-dihydroguanosine 5'-triphosphate. In Haemophilus influenzae (strain PittGG), this protein is GTP 3',8-cyclase.